The primary structure comprises 812 residues: MNRTLTDPMVSSFREDDPRPPVPGEEGETTCHHPSKLAMMRPKDPVKTIMADLRCSTARRDEDGLGEPEGSASPDSPLARWTKSLHFLLGDQDGAQLFRAYLEREKCVDTLDFWFACNGFRQMDLKDTKTHRVAKAIYKRYIENNSIVAKQLKPATKTFIRDNIKRQQIDSAMFDQAQMEIQTAMEENAYQMFLTSDIYLEYVRTGCENPSHVNPNGLGGLKLVCGYLPTLNEEEEWSCNDFKAKALATVVGLSAKTLRSPPLRAVEALEKGYRSYRRSDPGNPNRFTSGYSFAPATSANDSEVSSDALTDDSMSMTDSSVDAIPPYKLGSKKQLQREMQRNMRMNGQVSLPPFPRTRRPPKEMTPVEPAAFAAQLIARLERLKREQETMSSLEERLQQIQEEEERDESEMSSSSASHSLPLLPPGTCEEDPQAILDEHLSRVLKTPGCQSPGLLRHSPRSRSPEQRPLPRGGLSTRSQSSSMNGYVPAKTFISRQSTKHIHHHYIHHHAGPKSKEQIEVEATQRVQCLCHGTSECCTAPYIRSRSLGRDQCASPAEVALGHSSTLSKRLCKSGEEVNMEGLENSLLQLPADSTDRSQNVWQWILESDRQTKHKPHSTQNVKKSHSLEPTRTHTWGGGGSSGHLRAHQPAHPFVQDPAMPPLPPPNTLAQLEEARRRLEEVSKPSKQRHSTSSLQRDKSHPVPVQNGSSAFPMDERKDPKKMSGCHSSLGSETVVTYFFCGEEIPYRRMMKTHSLTLGHFKEQLRKKGNYRYFFKRASDEFECGAVFEEVWDDCTVLPMYEGKILGKVDRMD.

The interval 1-43 (MNRTLTDPMVSSFREDDPRPPVPGEEGETTCHHPSKLAMMRPK) is disordered. One can recognise an RGS domain in the interval 84-203 (SLHFLLGDQD…LTSDIYLEYV (120 aa)). 4 disordered regions span residues 275–326 (SYRR…AIPP), 388–430 (ETMS…TCEE), 446–484 (TPGCQSPGLLRHSPRSRSPEQRPLPRGGLSTRSQSSSMN), and 609–726 (RQTK…SGCH). A compositionally biased stretch (polar residues) spans 285–303 (NRFTSGYSFAPATSANDSE). Positions 305 to 323 (SSDALTDDSMSMTDSSVDA) are enriched in low complexity. Residues 329-415 (LGSKKQLQRE…RDESEMSSSS (87 aa)) are interaction with GSK3B. Residues 388–397 (ETMSSLEERL) show a composition bias toward basic and acidic residues. Positions 401–410 (QEEEERDESE) are enriched in acidic residues. Low complexity predominate over residues 411-421 (MSSSSASHSLP). The segment at 415–467 (SASHSLPLLPPGTCEEDPQAILDEHLSRVLKTPGCQSPGLLRHSPRSRSPEQR) is interaction with beta-catenin. Over residues 475 to 484 (STRSQSSSMN) the composition is skewed to polar residues. The span at 672–683 (EEARRRLEEVSK) shows a compositional bias: basic and acidic residues. In terms of domain architecture, DIX spans 730–812 (GSETVVTYFF…KILGKVDRMD (83 aa)).

In terms of assembly, interacts with hwa; leading to promote the tankyrase-mediated degradation of axin1. ADP-ribosylated by tankyrase tnks and tnks2. Poly-ADP-ribosylated protein is recognized by rnf146, followed by ubiquitination and subsequent activation of the Wnt signaling pathway. Post-translationally, ubiquitinated by rnf146 when poly-ADP-ribosylated, leading to its degradation and subsequent activation of the Wnt signaling pathway.

The protein localises to the cytoplasm. Component of the beta-catenin destruction complex required for regulating ctnnb1 levels through phosphorylation and ubiquitination, and modulating Wnt-signaling. Controls dorsoventral patterning by down-regulating ctnnb1 to inhibit the Wnt signaling pathway and ventralize embryos. The chain is Axin-2 (axin2) from Danio rerio (Zebrafish).